The chain runs to 190 residues: Dynein axonemal light chain 1 (190 aa).

An N-acetylalanine modification is found at Ala-2. 4 LRR repeats span residues 49–70 (NCEKLSLSTNCIEKIANLNGLK), 71–92 (NLRILSLGRNNIKNLNGLEAVG), 94–115 (TLEELWISYNFIEKLKGIHVMK), and 116–137 (KLKILYMSNNLVKDWAEFLKLA). Ser-56 bears the Phosphoserine mark. The region spanning 150 to 190 (NPLEEKHSAEGNWIDEATKRVPKLKKLDGTPVIKEDEEEES) is the LRRCT domain.

Belongs to the dynein light chain LC1-type family. In terms of assembly, interacts with ZMYND10 (via C-terminus). Interacts with DNAH5, a outer arm dynein heavy chain. Interacts with tubulin located within the A-tubule of the outer doublets in a ATP-independent manner. Expressed in the respiratory epithelium of the upper airways and the ependymal cells lining the brain ventricles.

It localises to the cytoplasm. The protein resides in the cytoskeleton. The protein localises to the cilium axoneme. In terms of biological role, part of the multisubunit axonemal ATPase complexes that generate the force for cilia motility and govern beat frequency. Component of the outer arm dynein (ODA). May be involved in a mechanosensory feedback mechanism controlling ODA activity based on external conformational cues by tethering the outer arm dynein heavy chain (DNAH5) to the microtubule within the axoneme. Important for ciliary function in the airways and for the function of the cilia that produce the nodal flow essential for the determination of the left-right asymmetry. This Mus musculus (Mouse) protein is Dynein axonemal light chain 1 (Dnal1).